The chain runs to 154 residues: UPF0178 protein BAV3236 (154 aa).

Belongs to the UPF0178 family.

The sequence is that of UPF0178 protein BAV3236 from Bordetella avium (strain 197N).